Reading from the N-terminus, the 174-residue chain is CD164 sialomucin-like 2 protein (174 aa).

A signal peptide spans 1-29 (MEAPGPRALRTALCGGCCCLLLCAQLAVA). The Extracellular segment spans residues 30 to 141 (GKGARGFGRG…AHSPGFDGAS (112 aa)). N-linked (GlcNAc...) asparagine glycosylation is found at Asn-71 and Asn-103. A helical transmembrane segment spans residues 142 to 162 (FIGGVVLVLSLQAVAFFVLHF). The Cytoplasmic portion of the chain corresponds to 163 to 174 (LKAKDSTYQTLI).

It belongs to the CD164 family.

The protein resides in the membrane. In Homo sapiens (Human), this protein is CD164 sialomucin-like 2 protein (CD164L2).